Here is a 315-residue protein sequence, read N- to C-terminus: Olfactory receptor 2T5 (315 aa).

At 1–29 the chain is on the extracellular side; that stretch reads MANITRMANHTGKLDFILMGLFRRSKHPA. N-linked (GlcNAc...) asparagine glycans are attached at residues Asn-3 and Asn-9. A helical transmembrane segment spans residues 30–53; that stretch reads LLSVVIFVVFLKALSGNAVLILLI. The Cytoplasmic segment spans residues 54 to 61; that stretch reads HCDAHLHS. Residues 62–83 form a helical membrane-spanning segment; the sequence is PMYFFISQLSLMDMAYISVTVP. Residues 84 to 104 are Extracellular-facing; that stretch reads KMLLDQVMGVNKVSAPECGMQ. A disulfide bridge connects residues Cys-101 and Cys-193. The helical transmembrane segment at 105–124 threads the bilayer; the sequence is MFLYLTLAGSEFFLLATMAY. The Cytoplasmic segment spans residues 125 to 143; the sequence is DRYVAICHPLRYPVLMNHR. A helical transmembrane segment spans residues 144 to 162; sequence VCLFLASGCWFLGSVDGFM. Residues 163-199 are Extracellular-facing; it reads LTPITMSFPFCRSWEIHHFFCEVPAVTILSCSDTSLY. The chain crosses the membrane as a helical span at residues 200-223; sequence ETLMYLCCVLMLLIPVTIISSSYL. Over 224-240 the chain is Cytoplasmic; sequence LILLTVHRMNSAEGRKK. A helical transmembrane segment spans residues 241-263; that stretch reads AFATCSSHLTVVILFYGAAVYTY. Topologically, residues 264–276 are extracellular; the sequence is MLPSSYHTPEKDM. Residues 277-296 traverse the membrane as a helical segment; sequence MVSVFYTILTPVLNPLIYSL. Topologically, residues 297–315 are cytoplasmic; the sequence is RNKDVMGALKKMLTVRFVL.

Belongs to the G-protein coupled receptor 1 family.

It localises to the cell membrane. Functionally, odorant receptor. In Homo sapiens (Human), this protein is Olfactory receptor 2T5 (OR2T5).